A 262-amino-acid chain; its full sequence is Global transcriptional regulator CodY (262 aa).

Residues Met-1–Leu-159 form a GAF domain region. A DNA-binding region (H-T-H motif) is located at residues Ala-207–Arg-226.

This sequence belongs to the CodY family.

It is found in the cytoplasm. Functionally, DNA-binding global transcriptional regulator which is involved in the adaptive response to starvation and acts by directly or indirectly controlling the expression of numerous genes in response to nutrient availability. During rapid exponential growth, CodY is highly active and represses genes whose products allow adaptation to nutrient depletion. The sequence is that of Global transcriptional regulator CodY from Streptococcus pneumoniae (strain ATCC BAA-255 / R6).